Here is a 397-residue protein sequence, read N- to C-terminus: Elongation factor Tu (397 aa).

The tr-type G domain maps to 10 to 206; the sequence is KPHVNIGTIG…AVDTSIPQPE (197 aa). The G1 stretch occupies residues 19–26; the sequence is GHIDHGKT. Residue 19 to 26 participates in GTP binding; it reads GHIDHGKT. T26 contacts Mg(2+). A G2 region spans residues 62 to 66; it reads GITIS. A G3 region spans residues 83–86; that stretch reads DCPG. GTP-binding positions include 83 to 87 and 138 to 141; these read DCPGH and NKSD. The interval 138 to 141 is G4; that stretch reads NKSD. Positions 176 to 178 are G5; sequence SAL.

It belongs to the TRAFAC class translation factor GTPase superfamily. Classic translation factor GTPase family. EF-Tu/EF-1A subfamily. Monomer.

It localises to the cytoplasm. The enzyme catalyses GTP + H2O = GDP + phosphate + H(+). Functionally, GTP hydrolase that promotes the GTP-dependent binding of aminoacyl-tRNA to the A-site of ribosomes during protein biosynthesis. In Salinispora tropica (strain ATCC BAA-916 / DSM 44818 / JCM 13857 / NBRC 105044 / CNB-440), this protein is Elongation factor Tu.